We begin with the raw amino-acid sequence, 477 residues long: Erythritol/L-threitol-binding protein (477 aa).

The tat-type signal signal peptide spans 1 to 38; sequence MMSRESQPGLHRQLSRRNMLAAMGLAGAAAVSLPVLSA.

This sequence belongs to the bacterial solute-binding protein 1 family. In terms of processing, predicted to be exported by the Tat system. The position of the signal peptide cleavage has not been experimentally proven.

Its function is as follows. Part of an ABC transporter complex involved in erythritol/L-threitol import. Binds erythritol and L-threitol. Functions in the transport for the degradation pathways of erythritol and L-threitol, that allow M.smegmatis to grow on these compounds as the sole carbon source. This Mycolicibacterium smegmatis (strain ATCC 700084 / mc(2)155) (Mycobacterium smegmatis) protein is Erythritol/L-threitol-binding protein.